Here is a 158-residue protein sequence, read N- to C-terminus: MRAPMTLKGVRRLRDELEHLKSVKRPEIINAIAEARAHGDLKENAEYHAAREQQSFIEGRIKQLEGELSHAEVIDVAKLNAGTKIVFGATVTLADLGTDEESRYQIVGDLEADIKQGLVAISSPVARALIGKQEGDTIVIEAPAGRREYEVVAVEYIS.

Residues 45–72 (AEYHAAREQQSFIEGRIKQLEGELSHAE) are a coiled coil.

The protein belongs to the GreA/GreB family.

Functionally, necessary for efficient RNA polymerase transcription elongation past template-encoded arresting sites. The arresting sites in DNA have the property of trapping a certain fraction of elongating RNA polymerases that pass through, resulting in locked ternary complexes. Cleavage of the nascent transcript by cleavage factors such as GreA or GreB allows the resumption of elongation from the new 3'terminus. GreA releases sequences of 2 to 3 nucleotides. The sequence is that of Transcription elongation factor GreA from Xylella fastidiosa (strain M23).